Here is a 249-residue protein sequence, read N- to C-terminus: Phosphomannomutase 2 (249 aa).

Aspartate 12 serves as the catalytic Nucleophile. Residues aspartate 12 and aspartate 14 each coordinate Mg(2+). The active-site Proton donor/acceptor is aspartate 14. Positions 21, 123, 134, 141, 179, and 181 each coordinate alpha-D-mannose 1-phosphate. Aspartate 209 contacts Mg(2+).

It belongs to the eukaryotic PMM family. As to quaternary structure, homodimer.

Its subcellular location is the cytoplasm. It carries out the reaction alpha-D-mannose 1-phosphate = D-mannose 6-phosphate. It participates in nucleotide-sugar biosynthesis; GDP-alpha-D-mannose biosynthesis; alpha-D-mannose 1-phosphate from D-fructose 6-phosphate: step 2/2. Its function is as follows. Involved in the synthesis of the GDP-mannose and dolichol-phosphate-mannose required for a number of critical mannosyl transfer reactions. The protein is Phosphomannomutase 2 (pmmB) of Dictyostelium discoideum (Social amoeba).